A 195-amino-acid chain; its full sequence is CASP-like protein 1B2 (195 aa).

Topologically, residues 1–25 (MDLEKGKKPSEQAAACRIMQVKDKL) are cytoplasmic. The chain crosses the membrane as a helical span at residues 26–46 (ITLQPVVRACVFLATAVAAVI). The Extracellular segment spans residues 47–78 (MGLNKQSYTTVVAIVGTRPVTQTFTAKFKDTP). The chain crosses the membrane as a helical span at residues 79-99 (AFVFFVIANAIASGYNLMVLV). Residues 100–114 (TRRILQRRAQSLSVH) are Cytoplasmic-facing. The helical transmembrane segment at 115-135 (LLDMVILTLLATGSATAASMA) threads the bilayer. Over 136 to 160 (QLGKNGNLHARWNPICDKFGSFCNH) the chain is Extracellular. The chain crosses the membrane as a helical span at residues 161–181 (GGIALVSSFIGVALMLALNLL). The Cytoplasmic portion of the chain corresponds to 182-195 (SAAANSPRSNVTGQ).

The protein belongs to the Casparian strip membrane proteins (CASP) family. Homodimer and heterodimers.

The protein localises to the cell membrane. This is CASP-like protein 1B2 from Oryza sativa subsp. indica (Rice).